Consider the following 251-residue polypeptide: MHILIANDDGYLAPGLAALHRALSPLGRVTVVAPEQNHSGASNSLTLQRPLSVFEATDGAQKGFRFVNGTPTDCVHIALTGMIEEKPDLVVSGINQGQNMGEDVLYSGTVAAAIEGYLFGIPSIAFSQADKGWAHLDAAERVAREVVERYLSDPLDGPVLLNVNIPNLPYAELAGWRATRLGKRHQSQPVIRQANPRGEPIFWVGAAGDAKDASEGTDFHAVAHGFVSLTPLQLDLTDTAQLRTVRRWQTP.

A divalent metal cation is bound by residues Asp8, Asp9, Ser39, and Asn95.

It belongs to the SurE nucleotidase family. A divalent metal cation is required as a cofactor.

It localises to the cytoplasm. The catalysed reaction is a ribonucleoside 5'-phosphate + H2O = a ribonucleoside + phosphate. Functionally, nucleotidase that shows phosphatase activity on nucleoside 5'-monophosphates. The chain is 5'-nucleotidase SurE from Ralstonia pickettii (strain 12J).